Consider the following 493-residue polypeptide: Cobyric acid synthase (493 aa).

The GATase cobBQ-type domain maps to 246-440; it reads PIDIAVIKMP…IHGVFDGVAF (195 aa). Residue cysteine 326 is the Nucleophile of the active site. Residue histidine 432 is part of the active site.

Belongs to the CobB/CobQ family. CobQ subfamily.

The protein operates within cofactor biosynthesis; adenosylcobalamin biosynthesis. Functionally, catalyzes amidations at positions B, D, E, and G on adenosylcobyrinic A,C-diamide. NH(2) groups are provided by glutamine, and one molecule of ATP is hydrogenolyzed for each amidation. This chain is Cobyric acid synthase, found in Clostridium botulinum (strain Loch Maree / Type A3).